The chain runs to 263 residues: MRLSSNWSKLQDGVTKKAGKKRIDKKPHIIKKVGQDKKPKSKIMGMIYQMNKEIDQQKENKKVGKKFEFTETITEIDTVETTTETKKDANKIGKYIAMDCEFVGVGPEGKDSALARVSLVNFHGNVVLDIFVKPRETVTDWRTWVSGITPDHMKNAVSFKQAQQQLSDILKDKILVGHAVKHDLEALMLSHPKSKVIDTARHLPFRQKYAKGKSPSLKKLAKEILNMDIQSGQHSSVEDARATMLIYKSAKQDFDKEHRKKFH.

The segment at 1–27 (MRLSSNWSKLQDGVTKKAGKKRIDKKP) is disordered. Positions 17 to 27 (KAGKKRIDKKP) are enriched in basic residues. The Exonuclease domain maps to 95-247 (YIAMDCEFVG…EDARATMLIY (153 aa)).

Belongs to the REXO4 family.

It localises to the nucleus. Its function is as follows. Exoribonuclease involved in ribosome biosynthesis. Involved in the processing of ITS1, the internal transcribed spacer localized between the 18S and 5.8S rRNAs. In Candida glabrata (strain ATCC 2001 / BCRC 20586 / JCM 3761 / NBRC 0622 / NRRL Y-65 / CBS 138) (Yeast), this protein is RNA exonuclease 4 (REX4).